A 421-amino-acid polypeptide reads, in one-letter code: Serine hydroxymethyltransferase (421 aa).

(6S)-5,6,7,8-tetrahydrofolate contacts are provided by residues L123 and 127–129 (GHL). The residue at position 232 (K232) is an N6-(pyridoxal phosphate)lysine.

The protein belongs to the SHMT family. As to quaternary structure, homodimer. It depends on pyridoxal 5'-phosphate as a cofactor.

The protein resides in the cytoplasm. The catalysed reaction is (6R)-5,10-methylene-5,6,7,8-tetrahydrofolate + glycine + H2O = (6S)-5,6,7,8-tetrahydrofolate + L-serine. Its pathway is one-carbon metabolism; tetrahydrofolate interconversion. It participates in amino-acid biosynthesis; glycine biosynthesis; glycine from L-serine: step 1/1. Functionally, catalyzes the reversible interconversion of serine and glycine with tetrahydrofolate (THF) serving as the one-carbon carrier. This reaction serves as the major source of one-carbon groups required for the biosynthesis of purines, thymidylate, methionine, and other important biomolecules. Also exhibits THF-independent aldolase activity toward beta-hydroxyamino acids, producing glycine and aldehydes, via a retro-aldol mechanism. In Ehrlichia ruminantium (strain Gardel), this protein is Serine hydroxymethyltransferase.